Here is a 231-residue protein sequence, read N- to C-terminus: RING finger protein 141 (231 aa).

The N-myristoyl glycine moiety is linked to residue glycine 2. The RING-type zinc-finger motif lies at 156 to 193 (CCICMDGRADLILPCAHSFCQKCIDKWSDRHRNCPICR).

It localises to the membrane. Its function is as follows. May be involved in spermatogenesis. The sequence is that of RING finger protein 141 (RNF141) from Canis lupus familiaris (Dog).